The sequence spans 488 residues: Facilitated trehalose transporter Tret1-2 homolog (488 aa).

The Cytoplasmic portion of the chain corresponds to 1–28 (MKILMRADTHVSYSVPAEGTKANFTFSQ). The helical transmembrane segment at 29-49 (VLAALSVSLCSLVVGFVSAYT) threads the bilayer. Over 50 to 72 (SPALVSMTDRTITSFEVTKDAGS) the chain is Extracellular. Residues 73–93 (WVGGIMPLAALAGGITGGPLI) form a helical membrane-spanning segment. Topologically, residues 94 to 105 (EYLGRRNTILAT) are cytoplasmic. A helical transmembrane segment spans residues 106-126 (AVPFIVSSLLIACAVNVIMIL). The Extracellular portion of the chain corresponds to 127–129 (CGR). A helical membrane pass occupies residues 130 to 150 (FLTGFCVGIASLSLPVYLGET). The Cytoplasmic portion of the chain corresponds to 151 to 160 (LQPEVRGTLG). The chain crosses the membrane as a helical span at residues 161-181 (LLPTALGNIGILVCYVAGSFM). Asn-182 is a glycosylation site (N-linked (GlcNAc...) asparagine). Over 182 to 184 (NWS) the chain is Extracellular. Residues 185 to 205 (ILAFLGAALPVPFLILMIIIP) traverse the membrane as a helical segment. At 206-268 (ETPRWFVNRG…ELFKRINLKP (63 aa)) the chain is on the cytoplasmic side. Residues 269–289 (LSISLGLMFFQQFSGINAVIF) form a helical membrane-spanning segment. The Extracellular portion of the chain corresponds to 290–305 (YTVQIFKDAGSTIDSN). Residues 306–326 (LCTIIVGIVNFFATFMGIILI) form a helical membrane-spanning segment. Topologically, residues 327-332 (DRLGRK) are cytoplasmic. Residues 333 to 353 (ILLYVSDIAMILTLSILGGFF) form a helical membrane-spanning segment. Over 354-372 (YCKAHGPDVSHLGWLPLSC) the chain is Extracellular. The chain crosses the membrane as a helical span at residues 373 to 393 (FVIYILGFSLGFGPIPWLMMG). Over 394–402 (EILPAKIRG) the chain is Cytoplasmic. Residues 403-423 (PAASVVTAFNWFCTFVVTKTF) form a helical membrane-spanning segment. The Extracellular portion of the chain corresponds to 424–433 (QDLTVAMGPH). A helical membrane pass occupies residues 434 to 454 (GAFWLFGVVCIVGLFFVIIYV). The Cytoplasmic portion of the chain corresponds to 455–488 (PETRGKSLEEIERKMMGRVPISAVVNIKPFSFNM).

This sequence belongs to the major facilitator superfamily. Sugar transporter (TC 2.A.1.1) family. Trehalose transporter subfamily.

It localises to the cell membrane. Functionally, fails to transport trehalose. The chain is Facilitated trehalose transporter Tret1-2 homolog from Drosophila sechellia (Fruit fly).